A 644-amino-acid polypeptide reads, in one-letter code: Biosynthetic arginine decarboxylase (644 aa).

Residue Lys-105 is modified to N6-(pyridoxal phosphate)lysine. A substrate-binding site is contributed by 287–297 (LDVGGGLGIDY).

Belongs to the Orn/Lys/Arg decarboxylase class-II family. SpeA subfamily. It depends on Mg(2+) as a cofactor. The cofactor is pyridoxal 5'-phosphate.

The catalysed reaction is L-arginine + H(+) = agmatine + CO2. Its function is as follows. Catalyzes the biosynthesis of agmatine from arginine. This chain is Biosynthetic arginine decarboxylase, found in Parasynechococcus marenigrum (strain WH8102).